A 299-amino-acid polypeptide reads, in one-letter code: MRLVLVAGPTASGKTALAVALAQRLGGEIVNADSQQVYRGLDVGTAKPTAEERAAAPHHLLDLVEPGEGMDAARFAALADAAIADIAARGRVPIVAGGTGLYVRALLHGVVEAPGRDPELRRALEAEAARDGRPALHARLAAVDPAAAARIRPNDLVRVVRALEIAAGGRTPSELYQAHAFREDRYDAALLALDPPRAELHARIDARVRAMFAGGLLEEARALAARFGGALPARLPIGYAEAAAHLRGELDLEEAIRRVQVAHRRYARRQVIWLRKERGVVWIAPPYDPEALARRVEKR.

8–15 (GPTASGKT) contacts ATP. Position 10-15 (10-15 (TASGKT)) interacts with substrate. Positions 33 to 36 (DSQQ) are interaction with substrate tRNA.

Belongs to the IPP transferase family. In terms of assembly, monomer. Requires Mg(2+) as cofactor.

The enzyme catalyses adenosine(37) in tRNA + dimethylallyl diphosphate = N(6)-dimethylallyladenosine(37) in tRNA + diphosphate. In terms of biological role, catalyzes the transfer of a dimethylallyl group onto the adenine at position 37 in tRNAs that read codons beginning with uridine, leading to the formation of N6-(dimethylallyl)adenosine (i(6)A). This is tRNA dimethylallyltransferase from Anaeromyxobacter dehalogenans (strain 2CP-C).